Here is a 378-residue protein sequence, read N- to C-terminus: Erythronate-4-phosphate dehydrogenase (378 aa).

Ser45 and Thr66 together coordinate substrate. Positions 146 and 175 each coordinate NAD(+). Arg208 is an active-site residue. An NAD(+)-binding site is contributed by Asp232. The active site involves Glu237. The active-site Proton donor is His254. NAD(+) is bound at residue Gly257. Tyr258 is a binding site for substrate.

This sequence belongs to the D-isomer specific 2-hydroxyacid dehydrogenase family. PdxB subfamily. As to quaternary structure, homodimer.

The protein resides in the cytoplasm. It catalyses the reaction 4-phospho-D-erythronate + NAD(+) = (R)-3-hydroxy-2-oxo-4-phosphooxybutanoate + NADH + H(+). Its pathway is cofactor biosynthesis; pyridoxine 5'-phosphate biosynthesis; pyridoxine 5'-phosphate from D-erythrose 4-phosphate: step 2/5. Catalyzes the oxidation of erythronate-4-phosphate to 3-hydroxy-2-oxo-4-phosphonooxybutanoate. This chain is Erythronate-4-phosphate dehydrogenase, found in Salmonella agona (strain SL483).